Reading from the N-terminus, the 569-residue chain is Proline--tRNA ligase (569 aa).

This sequence belongs to the class-II aminoacyl-tRNA synthetase family. ProS type 1 subfamily. As to quaternary structure, homodimer.

The protein resides in the cytoplasm. The enzyme catalyses tRNA(Pro) + L-proline + ATP = L-prolyl-tRNA(Pro) + AMP + diphosphate. Functionally, catalyzes the attachment of proline to tRNA(Pro) in a two-step reaction: proline is first activated by ATP to form Pro-AMP and then transferred to the acceptor end of tRNA(Pro). As ProRS can inadvertently accommodate and process non-cognate amino acids such as alanine and cysteine, to avoid such errors it has two additional distinct editing activities against alanine. One activity is designated as 'pretransfer' editing and involves the tRNA(Pro)-independent hydrolysis of activated Ala-AMP. The other activity is designated 'posttransfer' editing and involves deacylation of mischarged Ala-tRNA(Pro). The misacylated Cys-tRNA(Pro) is not edited by ProRS. The polypeptide is Proline--tRNA ligase (Levilactobacillus brevis (strain ATCC 367 / BCRC 12310 / CIP 105137 / JCM 1170 / LMG 11437 / NCIMB 947 / NCTC 947) (Lactobacillus brevis)).